Consider the following 440-residue polypeptide: RUN domain-containing protein 3A (440 aa).

In terms of domain architecture, RUN spans 52–184 (DDSSEEFVNF…IDFSFCLKGE (133 aa)). The tract at residues 213-233 (DDRESVGGSSSEDSSPEHPYL) is disordered. Positions 262 to 317 (YLEELVRLRETQLKNLEAENKRLTQRISEQAEQSLQEKHQLEGVILELQEQLTGLL) form a coiled coil. Residues 374-402 (LSSESQRLDGKQDGEPWGPIGKDPTPSML) form a disordered region.

Belongs to the RUNDC3 family.

In Xenopus tropicalis (Western clawed frog), this protein is RUN domain-containing protein 3A (rundc3a).